Reading from the N-terminus, the 158-residue chain is NAD(P)H-quinone oxidoreductase subunit J, chloroplastic (158 aa).

It belongs to the complex I 30 kDa subunit family. As to quaternary structure, NDH is composed of at least 16 different subunits, 5 of which are encoded in the nucleus.

Its subcellular location is the plastid. The protein resides in the chloroplast thylakoid membrane. The catalysed reaction is a plastoquinone + NADH + (n+1) H(+)(in) = a plastoquinol + NAD(+) + n H(+)(out). It catalyses the reaction a plastoquinone + NADPH + (n+1) H(+)(in) = a plastoquinol + NADP(+) + n H(+)(out). NDH shuttles electrons from NAD(P)H:plastoquinone, via FMN and iron-sulfur (Fe-S) centers, to quinones in the photosynthetic chain and possibly in a chloroplast respiratory chain. The immediate electron acceptor for the enzyme in this species is believed to be plastoquinone. Couples the redox reaction to proton translocation, and thus conserves the redox energy in a proton gradient. The sequence is that of NAD(P)H-quinone oxidoreductase subunit J, chloroplastic from Oenothera argillicola (Appalachian evening primrose).